Consider the following 388-residue polypeptide: Chorismate synthase (388 aa).

NADP(+) contacts are provided by R39 and R45. Residues 132–134 (RSS), 251–252 (NA), G296, 311–315 (KPIPT), and R337 each bind FMN.

This sequence belongs to the chorismate synthase family. In terms of assembly, homotetramer. The cofactor is FMNH2.

It catalyses the reaction 5-O-(1-carboxyvinyl)-3-phosphoshikimate = chorismate + phosphate. Its pathway is metabolic intermediate biosynthesis; chorismate biosynthesis; chorismate from D-erythrose 4-phosphate and phosphoenolpyruvate: step 7/7. In terms of biological role, catalyzes the anti-1,4-elimination of the C-3 phosphate and the C-6 proR hydrogen from 5-enolpyruvylshikimate-3-phosphate (EPSP) to yield chorismate, which is the branch point compound that serves as the starting substrate for the three terminal pathways of aromatic amino acid biosynthesis. This reaction introduces a second double bond into the aromatic ring system. The sequence is that of Chorismate synthase from Staphylococcus epidermidis (strain ATCC 35984 / DSM 28319 / BCRC 17069 / CCUG 31568 / BM 3577 / RP62A).